We begin with the raw amino-acid sequence, 400 residues long: Eukaryotic translation initiation factor 3 subunit M (400 aa).

The region spanning 180 to 354 is the PCI domain; it reads LIAKIYSALV…QSFAVHRAQK (175 aa).

This sequence belongs to the eIF-3 subunit M family. As to quaternary structure, component of the eukaryotic translation initiation factor 3 (eIF-3) complex.

Its subcellular location is the cytoplasm. Its function is as follows. Component of the eukaryotic translation initiation factor 3 (eIF-3) complex, which is involved in protein synthesis of a specialized repertoire of mRNAs and, together with other initiation factors, stimulates binding of mRNA and methionyl-tRNAi to the 40S ribosome. The eIF-3 complex specifically targets and initiates translation of a subset of mRNAs involved in cell proliferation. This Yarrowia lipolytica (strain CLIB 122 / E 150) (Yeast) protein is Eukaryotic translation initiation factor 3 subunit M.